The primary structure comprises 418 residues: MLHPRARTMLLLSLPAVAIGITSSLILIMVMKIASVLQNLLWQRLPGTLGIAQDSPLWIIGVLTLTGIAVGLVIRFSQGHAGPDPACEPLIGAPIPPSALPGLIVALILGLAGGVSLGPEHPIITVNIALAVAIGARLLPRVNRMEWTILASAGTIGALFGTTVAAALIFSQTLNGSNEVPLWDRLFAPLMAAAAGALTTGLFFHPHFSLPIAHYGQMEMTDILSGAIVAAIAIAAGMVAVWCLPRLHAMMHQMKNPVFVLGIGGFILGILGVIGGPVSLFKGLDEMQQMVANQAFSTSDYFLLAVIKLAALVVAAASGFRGGRIFPAVFVGVALGLMLHEHVPAVPAAITVSCAILGIVLVVTRDGWLSLFMAAVVVPNTTLLPLLCIVMLPAWLLLAGKPMMMVNRPKQQPPHDNV.

Transmembrane regions (helical) follow at residues 10–30 (LLLS…LIMV), 54–74 (DSPL…GLVI), 99–119 (ALPG…SLGP), 120–140 (EHPI…RLLP), 149–169 (ILAS…AALI), 186–206 (LFAP…FFHP), 223–243 (ILSG…AVWC), 258–278 (VFVL…GGPV), 300–320 (DYFL…ASGF), 322–342 (GGRI…LHEH), 343–363 (VPAV…VLVV), and 371–391 (LFMA…CIVM).

This sequence belongs to the chloride channel (TC 2.A.49) family.

It is found in the cell membrane. This chain is Putative ion-transport protein YfeO, found in Escherichia coli O127:H6 (strain E2348/69 / EPEC).